We begin with the raw amino-acid sequence, 627 residues long: Carene synthase, chloroplastic (627 aa).

The transit peptide at Met1–Leu36 directs the protein to the chloroplast. Mg(2+) contacts are provided by Asp378, Asp382, and Asp530. Residues Asp378–Asp382 carry the DDXXD motif motif.

Belongs to the terpene synthase family. Tpsd subfamily. Requires Mg(2+) as cofactor. Mn(2+) is required as a cofactor.

The protein resides in the plastid. It is found in the chloroplast. It catalyses the reaction (2E)-geranyl diphosphate = (+)-car-3-ene + diphosphate. Its pathway is terpene metabolism; oleoresin biosynthesis. In terms of biological role, terpene synthase (TPS) involved in defensive oleoresin formation in conifers in response to insect attack or other injury. In Picea abies (Norway spruce), this protein is Carene synthase, chloroplastic (JF67).